A 163-amino-acid polypeptide reads, in one-letter code: Sorting nexin-3 (163 aa).

Residues 1–20 are disordered; it reads MASDQDNSGLDAPGSQFHRP. A PX domain is found at 42 to 159; that stretch reads NFLEIEVRNP…AAFVQDPNWD (118 aa). The a 1,2-diacyl-sn-glycero-3-phospho-(1D-myo-inositol-3-phosphate) site is built by Arg85, Ser87, Lys111, Arg116, and Arg125.

It belongs to the sorting nexin family.

It is found in the cytoplasm. Its subcellular location is the golgi apparatus membrane. It localises to the prevacuolar compartment membrane. In terms of biological role, required for retention of late Golgi membrane proteins. Component of the retrieval machinery that functions by direct interaction with the cytosolic tails of certain TGN membrane proteins during the sorting/budding process at the prevacuolar compartment. Binds phosphatidylinositol 3-phosphate (PtdIns(P3)). The sequence is that of Sorting nexin-3 (SNX3) from Gibberella zeae (strain ATCC MYA-4620 / CBS 123657 / FGSC 9075 / NRRL 31084 / PH-1) (Wheat head blight fungus).